The primary structure comprises 353 residues: Chorismate synthase (353 aa).

NADP(+)-binding residues include Arg-48 and Arg-54. Residues 125–127 (RSS), 238–239 (NA), Gly-278, 293–297 (KPTSS), and Arg-319 each bind FMN.

It belongs to the chorismate synthase family. Homotetramer. Requires FMNH2 as cofactor.

It carries out the reaction 5-O-(1-carboxyvinyl)-3-phosphoshikimate = chorismate + phosphate. It functions in the pathway metabolic intermediate biosynthesis; chorismate biosynthesis; chorismate from D-erythrose 4-phosphate and phosphoenolpyruvate: step 7/7. Its function is as follows. Catalyzes the anti-1,4-elimination of the C-3 phosphate and the C-6 proR hydrogen from 5-enolpyruvylshikimate-3-phosphate (EPSP) to yield chorismate, which is the branch point compound that serves as the starting substrate for the three terminal pathways of aromatic amino acid biosynthesis. This reaction introduces a second double bond into the aromatic ring system. The protein is Chorismate synthase of Buchnera aphidicola subsp. Schizaphis graminum (strain Sg).